The primary structure comprises 288 residues: ATP synthase gamma chain (288 aa).

This sequence belongs to the ATPase gamma chain family. F-type ATPases have 2 components, CF(1) - the catalytic core - and CF(0) - the membrane proton channel. CF(1) has five subunits: alpha(3), beta(3), gamma(1), delta(1), epsilon(1). CF(0) has three main subunits: a, b and c.

The protein resides in the cell inner membrane. In terms of biological role, produces ATP from ADP in the presence of a proton gradient across the membrane. The gamma chain is believed to be important in regulating ATPase activity and the flow of protons through the CF(0) complex. The protein is ATP synthase gamma chain of Legionella pneumophila (strain Corby).